Reading from the N-terminus, the 366-residue chain is Major outer membrane protein (366 aa).

The signal sequence occupies residues 1–21; sequence MKKTLLATAIAGAMAASGAQA.

Belongs to the Gram-negative porin family. As to quaternary structure, homotrimer.

It is found in the cell outer membrane. This is Major outer membrane protein from Halomonas elongata (strain ATCC 33173 / DSM 2581 / NBRC 15536 / NCIMB 2198 / 1H9).